The primary structure comprises 407 residues: Digeranylgeranylglycerophospholipid reductase (407 aa).

Positions 15, 34, 45, 46, 48, 99, 123, 281, 293, and 294 each coordinate FAD.

The protein belongs to the geranylgeranyl reductase family. DGGGPL reductase subfamily. The cofactor is FAD.

The enzyme catalyses a 2,3-bis-O-phytanyl-sn-glycerol 1-phospholipid + 8 oxidized 2[4Fe-4S]-[ferredoxin] = a 2,3-bis-O-(geranylgeranyl)-sn-glycerol 1-phospholipid + 8 reduced 2[4Fe-4S]-[ferredoxin] + 16 H(+). It carries out the reaction 2,3-bis-O-(phytanyl)-sn-glycerol 1-phosphate + 8 oxidized 2[4Fe-4S]-[ferredoxin] = 2,3-bis-O-(geranylgeranyl)-sn-glycerol 1-phosphate + 8 reduced 2[4Fe-4S]-[ferredoxin] + 16 H(+). The catalysed reaction is a 2,3-bis-O-phytanyl-sn-glycerol 1-phospholipid + 8 A = a 2,3-bis-O-(geranylgeranyl)-sn-glycerol 1-phospholipid + 8 AH2. It catalyses the reaction CDP-2,3-bis-O-(geranylgeranyl)-sn-glycerol + 8 AH2 = CDP-2,3-bis-O-(phytanyl)-sn-glycerol + 8 A. The enzyme catalyses archaetidylserine + 8 AH2 = 2,3-bis-O-phytanyl-sn-glycero-3-phospho-L-serine + 8 A. Its pathway is membrane lipid metabolism; glycerophospholipid metabolism. Functionally, is involved in the reduction of 2,3-digeranylgeranylglycerophospholipids (unsaturated archaeols) into 2,3-diphytanylglycerophospholipids (saturated archaeols) in the biosynthesis of archaeal membrane lipids. Catalyzes the formation of archaetidic acid (2,3-di-O-phytanyl-sn-glyceryl phosphate) from 2,3-di-O-geranylgeranylglyceryl phosphate (DGGGP) via the hydrogenation of each double bond of the isoprenoid chains. Is also probably able to reduce double bonds of geranyl groups in CDP-2,3-bis-O-(geranylgeranyl)-sn-glycerol and archaetidylserine, thus acting at various stages in the biosynthesis of archaeal membrane lipids. In Methanosarcina mazei (strain ATCC BAA-159 / DSM 3647 / Goe1 / Go1 / JCM 11833 / OCM 88) (Methanosarcina frisia), this protein is Digeranylgeranylglycerophospholipid reductase.